The following is a 103-amino-acid chain: Large ribosomal subunit protein bL21 (103 aa).

It belongs to the bacterial ribosomal protein bL21 family. In terms of assembly, part of the 50S ribosomal subunit. Contacts protein L20.

In terms of biological role, this protein binds to 23S rRNA in the presence of protein L20. In Vesicomyosocius okutanii subsp. Calyptogena okutanii (strain HA), this protein is Large ribosomal subunit protein bL21.